Reading from the N-terminus, the 802-residue chain is Phenylalanine--tRNA ligase beta subunit (802 aa).

The tRNA-binding domain occupies 40 to 155 (SASLKNVVVG…AHVETGVNAI (116 aa)). A B5 domain is found at 409–484 (KAVNKIETSL…RIYGYDEIPV (76 aa)). Residues aspartate 462, aspartate 468, glutamate 471, and glutamate 472 each coordinate Mg(2+). The region spanning 709–802 (PRYPEMTRDL…LQEKLNAIIR (94 aa)) is the FDX-ACB domain.

It belongs to the phenylalanyl-tRNA synthetase beta subunit family. Type 1 subfamily. Tetramer of two alpha and two beta subunits. The cofactor is Mg(2+).

The protein localises to the cytoplasm. It catalyses the reaction tRNA(Phe) + L-phenylalanine + ATP = L-phenylalanyl-tRNA(Phe) + AMP + diphosphate + H(+). The protein is Phenylalanine--tRNA ligase beta subunit of Listeria monocytogenes serovar 1/2a (strain ATCC BAA-679 / EGD-e).